Consider the following 105-residue polypeptide: Large ribosomal subunit protein eL36 (105 aa).

Position 62 is an N6-acetyllysine (Lys-62).

Belongs to the eukaryotic ribosomal protein eL36 family. As to quaternary structure, component of the large ribosomal subunit.

The protein localises to the cytoplasm. It is found in the cytosol. In terms of biological role, component of the large ribosomal subunit. The ribosome is a large ribonucleoprotein complex responsible for the synthesis of proteins in the cell. The polypeptide is Large ribosomal subunit protein eL36 (RPL36) (Bos taurus (Bovine)).